A 454-amino-acid polypeptide reads, in one-letter code: tRNA modification GTPase MnmE (454 aa).

Residues R23, E80, and K120 each coordinate (6S)-5-formyl-5,6,7,8-tetrahydrofolate. The TrmE-type G domain occupies 216-377 (GMKVVIAGRP…LRSHLKEAMG (162 aa)). N226 contacts K(+). GTP contacts are provided by residues 226–231 (NAGKSS), 245–251 (TDIAGTT), 270–273 (DTAG), and 358–360 (SAR). S230 serves as a coordination point for Mg(2+). Residues T245, I247, and T250 each contribute to the K(+) site. Mg(2+) is bound at residue T251. K454 is a (6S)-5-formyl-5,6,7,8-tetrahydrofolate binding site.

The protein belongs to the TRAFAC class TrmE-Era-EngA-EngB-Septin-like GTPase superfamily. TrmE GTPase family. As to quaternary structure, homodimer. Heterotetramer of two MnmE and two MnmG subunits. It depends on K(+) as a cofactor.

It localises to the cytoplasm. Its function is as follows. Exhibits a very high intrinsic GTPase hydrolysis rate. Involved in the addition of a carboxymethylaminomethyl (cmnm) group at the wobble position (U34) of certain tRNAs, forming tRNA-cmnm(5)s(2)U34. This is tRNA modification GTPase MnmE from Proteus mirabilis (strain HI4320).